The chain runs to 648 residues: Replication restart protein PriA (648 aa).

The Helicase ATP-binding domain occupies 131–297 (TILNESNKPT…EIGKYQLVTL (167 aa)). ATP is bound at residue 144–151 (GVTGSGKT). The DEAH box signature appears at 240–243 (DEEH). The Zn(2+) site is built by Cys-358, Cys-361, Cys-367, Cys-370, Cys-385, Cys-388, Cys-398, and Cys-401. One can recognise a Helicase C-terminal domain in the interval 393 to 548 (KIFSSCPECL…SFFANELEIR (156 aa)).

This sequence belongs to the helicase family. PriA subfamily. In terms of assembly, component of the replication restart primosome. Requires Zn(2+) as cofactor.

It carries out the reaction Couples ATP hydrolysis with the unwinding of duplex DNA by translocating in the 3'-5' direction.. The enzyme catalyses ATP + H2O = ADP + phosphate + H(+). In terms of biological role, initiates the restart of stalled replication forks, which reloads the replicative helicase on sites other than the origin of replication. Recognizes and binds to abandoned replication forks and remodels them to uncover a helicase loading site. Promotes assembly of the primosome at these replication forks. This is Replication restart protein PriA from Rickettsia felis (strain ATCC VR-1525 / URRWXCal2) (Rickettsia azadi).